The primary structure comprises 430 residues: MSLKTPKGTTDLNPDDALVYEDLIDRTKNIFKLHGAVPIDTPVFELKSILLNKYGEDTKLIYDLKNNGGEECALRYDLTVPFSRYMSMNKLKKIKRYQIGKVYRRDQPSVVQGRWREFLQADFDIAGESLPMMADSELVCCMNRLLKTYNIGDFVIRVSDKRILYGIFEVCEIPNNLFATVSSSIDKLDKIAVNDINKELKLKGLTDKQIINLNIYIQKSGTVDVLDFLRENDVYKKCSEAVDDLCKLYEYCKIMKCSDHLIIDLSLARGLDYYTGMIIEGKYLNKNIGSVAGGGRYDNLIGSLENSSYTNTYNVPCAGFSIGLSRIFSCIQKPKVNTNVKVFISASGKLLLEERLKIQSILWEANISLETFYNKRNNPGEHKKYCVKHGIKYLIVVKEEQYNKGFVTVIEVNTNLENVIMIDNLPSHLQ.

Belongs to the class-II aminoacyl-tRNA synthetase family.

The protein resides in the cytoplasm. It catalyses the reaction tRNA(His) + L-histidine + ATP = L-histidyl-tRNA(His) + AMP + diphosphate + H(+). This chain is Probable histidine--tRNA ligase, cytoplasmic, found in Vairimorpha ceranae (strain BRL01) (Microsporidian parasite).